Here is a 64-residue protein sequence, read N- to C-terminus: MVENPMVINNWHDKLTETDVQIDFYGDEVTPVDDYVIDGGEIILRENLERYLREQLGFEFKNAQ.

This is an uncharacterized protein from Bacillus subtilis (strain 168).